Consider the following 271-residue polypeptide: Phosphatidylinositol transfer protein alpha isoform (271 aa).

Residues T59, K61, E86, N90, T97, and K195 each contribute to the a 1,2-diacyl-sn-glycero-3-phospho-(1D-myo-inositol) site. K216 bears the N6-acetyllysine mark. Over residues 251 to 264 (TKRQLDEMRQKDPV) the composition is skewed to basic and acidic residues. The tract at residues 251–271 (TKRQLDEMRQKDPVKGMTADD) is disordered.

Belongs to the PtdIns transfer protein family. PI transfer class I subfamily. Post-translationally, phosphorylated by PKC in a calcium and phosphatidylserine-dependent manner.

It localises to the cytoplasm. It is found in the nucleus. The catalysed reaction is a 1,2-diacyl-sn-glycero-3-phosphocholine(in) = a 1,2-diacyl-sn-glycero-3-phosphocholine(out). It catalyses the reaction a 1,2-diacyl-sn-glycero-3-phospho-(1D-myo-inositol)(in) = a 1,2-diacyl-sn-glycero-3-phospho-(1D-myo-inositol)(out). Its function is as follows. Catalyzes the transfer of phosphatidylinositol (PI) and phosphatidylcholine (PC) between membranes. Shows a preference for PI and PC containing shorter saturated or monosaturated acyl chains at the sn-1 and sn-2 positions. Preference order for PC is C16:1 &gt; C16:0 &gt; C18:1 &gt; C18:0 &gt; C20:4 and for PI is C16:1 &gt; C16:0 &gt; C18:1 &gt; C18:0 &gt; C20:4 &gt; C20:3. The polypeptide is Phosphatidylinositol transfer protein alpha isoform (Pitpna) (Mus musculus (Mouse)).